Here is a 339-residue protein sequence, read N- to C-terminus: Ribonucleoside-diphosphate reductase subunit beta (339 aa).

The Fe cation site is built by Asp87 and His121. The active site involves Tyr125. His215 provides a ligand contact to Fe cation.

Belongs to the ribonucleoside diphosphate reductase small chain family. As to quaternary structure, tetramer of two alpha and two beta subunits. Requires Fe cation as cofactor.

The enzyme catalyses a 2'-deoxyribonucleoside 5'-diphosphate + [thioredoxin]-disulfide + H2O = a ribonucleoside 5'-diphosphate + [thioredoxin]-dithiol. In terms of biological role, provides the precursors necessary for DNA synthesis. Catalyzes the biosynthesis of deoxyribonucleotides from the corresponding ribonucleotides. The sequence is that of Ribonucleoside-diphosphate reductase subunit beta (nrdF) from Mycoplasma pneumoniae (strain ATCC 29342 / M129 / Subtype 1) (Mycoplasmoides pneumoniae).